The primary structure comprises 296 residues: Transmembrane protein 156 (296 aa).

The Cytoplasmic portion of the chain corresponds to 1–4; sequence MTKT. A helical transmembrane segment spans residues 5 to 25; it reads ALLKLFVAIVITFILILPEYF. Over 26-211 the chain is Extracellular; sequence KTPKERTLEL…EMDIKNITCS (186 aa). Residues N45 and N156 are each glycosylated (N-linked (GlcNAc...) asparagine). A helical transmembrane segment spans residues 212–232; that stretch reads MKITWYILVLLVFIFLIILTI. At 233-296 the chain is on the cytoplasmic side; that stretch reads RKILEGQRRV…QEVLPPIPEL (64 aa).

The protein localises to the membrane. The protein is Transmembrane protein 156 (TMEM156) of Homo sapiens (Human).